We begin with the raw amino-acid sequence, 795 residues long: Delta-1-pyrroline-5-carboxylate synthase (795 aa).

The segment at 1–361 (MLSQVYRCGF…FFSEVKPAGP (361 aa)) is glutamate 5-kinase. Substrate-binding residues include Ser-117, Asp-223, and Asn-246. ATP contacts are provided by residues 266–267 (SD) and 305–311 (MGGMEAK). Residues Lys-311, Lys-347, and Lys-550 each carry the N6-succinyllysine modification. The tract at residues 362 to 795 (TVEQQGEMAR…NLPIPQRNTN (434 aa)) is gamma-glutamyl phosphate reductase.

In the N-terminal section; belongs to the glutamate 5-kinase family. It in the C-terminal section; belongs to the gamma-glutamyl phosphate reductase family. As to quaternary structure, can form homodimers/multimers.

The protein localises to the mitochondrion. It is found in the mitochondrion matrix. It carries out the reaction L-glutamate + ATP = L-glutamyl 5-phosphate + ADP. The catalysed reaction is L-glutamate 5-semialdehyde + phosphate + NADP(+) = L-glutamyl 5-phosphate + NADPH + H(+). It functions in the pathway amino-acid biosynthesis; L-proline biosynthesis; L-glutamate 5-semialdehyde from L-glutamate: step 1/2. It participates in amino-acid biosynthesis; L-proline biosynthesis; L-glutamate 5-semialdehyde from L-glutamate: step 2/2. Isoform Short: Inhibited by L-ornithine with a Ki of approximately 0.25 mm. Isoform Long: Insensitive to ornithine inhibition. This is due to the two amino acid insert which abolishes feedback inhibition of P5CS activity by L-ornithine. Bifunctional enzyme that converts glutamate to glutamate 5-semialdehyde, an intermediate in the biosynthesis of proline, ornithine and arginine. In Homo sapiens (Human), this protein is Delta-1-pyrroline-5-carboxylate synthase (ALDH18A1).